The sequence spans 639 residues: Chaperone protein DnaK (639 aa).

Phosphothreonine; by autocatalysis is present on Thr198. Residues 603–618 are compositionally biased toward low complexity; that stretch reads AKAQTQGGAQEGAAKQ. The interval 603 to 639 is disordered; it reads AKAQTQGGAQEGAAKQSNATADDVVDAEFEEVKDDKK. The segment covering 625 to 639 has biased composition (acidic residues); sequence DVVDAEFEEVKDDKK.

Belongs to the heat shock protein 70 family.

In terms of biological role, acts as a chaperone. The protein is Chaperone protein DnaK of Shewanella sp. (strain MR-7).